We begin with the raw amino-acid sequence, 339 residues long: Anthranilate phosphoribosyltransferase (339 aa).

5-phospho-alpha-D-ribose 1-diphosphate-binding positions include glycine 79, 82–83, threonine 87, 89–92, 107–115, and serine 119; these read GD, NIST, and KHGNRAVSS. Position 79 (glycine 79) interacts with anthranilate. Serine 91 is a Mg(2+) binding site. Asparagine 110 contacts anthranilate. Arginine 165 lines the anthranilate pocket. Positions 224 and 225 each coordinate Mg(2+).

The protein belongs to the anthranilate phosphoribosyltransferase family. As to quaternary structure, homodimer. Mg(2+) is required as a cofactor.

The enzyme catalyses N-(5-phospho-beta-D-ribosyl)anthranilate + diphosphate = 5-phospho-alpha-D-ribose 1-diphosphate + anthranilate. Its pathway is amino-acid biosynthesis; L-tryptophan biosynthesis; L-tryptophan from chorismate: step 2/5. In terms of biological role, catalyzes the transfer of the phosphoribosyl group of 5-phosphorylribose-1-pyrophosphate (PRPP) to anthranilate to yield N-(5'-phosphoribosyl)-anthranilate (PRA). This is Anthranilate phosphoribosyltransferase from Geobacillus thermodenitrificans (strain NG80-2).